Reading from the N-terminus, the 843-residue chain is Envelope glycoprotein gp160 (843 aa).

A signal peptide spans 1–31 (MRATEIRKNYQHLWKGGTLLLGMLMICSAAE). Residues 32-671 (QLWVTVYYGV…ITKWLWYIKI (640 aa)) lie on the Extracellular side of the membrane. A disulfide bridge connects residues Cys53 and Cys73. N-linked (GlcNAc...) asparagine; by host glycosylation is found at Asn87, Asn129, Asn135, Asn138, Asn154, Asn158, Asn184, Asn193, Asn230, Asn237, Asn258, Asn272, Asn285, Asn291, Asn297, Asn327, and Asn351. 5 cysteine pairs are disulfide-bonded: Cys118-Cys201, Cys125-Cys192, Cys130-Cys155, Cys214-Cys243, and Cys224-Cys235. Residues 130-154 (CTDLRNATNTTSSSWETMEKGEIKN) are V1. The tract at residues 155–192 (CSFNITTSIRDKVQKEYALFYNLDVVPIDNASYRLISC) is V2. The interval 292–325 (CTRPNNNTRKSINIGPGRALYTTGEIIGDIRQAH) is V3. An intrachain disulfide couples Cys292 to Cys326. The segment at 359 to 369 (SSGGDPEIVTH) is CD4-binding loop. Cystine bridges form between Cys373/Cys432 and Cys380/Cys405. A V4 region spans residues 380–405 (CNSTQLFTWNDTRKLNNTGRNITLPC). Asn381, Asn389, Asn395, Asn400, Asn435, and Asn450 each carry an N-linked (GlcNAc...) asparagine; by host glycan. V5 stretches follow at residues 448-458 (DTNGTEIFRPG) and 450-458 (NGTEIFRPG). The interval 499–519 (AVGLGALFLGFLGAAGSTMGA) is fusion peptide. An immunosuppression region spans residues 561–579 (KQLQARVLAVERYLRDQQL). Cys585 and Cys591 are joined by a disulfide. Residues Asn598, Asn603, Asn612, and Asn624 are each glycosylated (N-linked (GlcNAc...) asparagine; by host). A coiled-coil region spans residues 620-654 (REIDNYTHIIYSLIEQSQNQQEKNEQELLALDKWA). The interval 649-670 (ALDKWASLWNWFDITKWLWYIK) is MPER; binding to GalCer. Residues 672 to 692 (FIMIVGGLIGLRIVFVVLSIV) form a helical membrane-spanning segment. The Cytoplasmic segment spans residues 693–843 (NRVRQGYSPL…IRQGLERALL (151 aa)). The YXXL motif; contains endocytosis signal motif lies at 699–702 (YSPL). The interval 706-731 (THLPAQRGPDRPDGIEEEGGERDRDR) is disordered. Residue Cys751 is the site of S-palmitoyl cysteine; by host attachment. Positions 842-843 (LL) match the Di-leucine internalization motif motif.

It belongs to the HIV-1 env protein family. In terms of assembly, the mature envelope protein (Env) consists of a homotrimer of non-covalently associated gp120-gp41 heterodimers. The resulting complex protrudes from the virus surface as a spike. There seems to be as few as 10 spikes on the average virion. Interacts with host CD4, CCR5 and CXCR4. Gp120 also interacts with the C-type lectins CD209/DC-SIGN and CLEC4M/DC-SIGNR (collectively referred to as DC-SIGN(R)). Gp120 and gp41 interact with GalCer. Gp120 interacts with host ITGA4/ITGB7 complex; on CD4+ T-cells, this interaction results in rapid activation of integrin ITGAL/LFA-1, which facilitates efficient cell-to-cell spreading of HIV-1. Gp120 interacts with cell-associated heparan sulfate; this interaction increases virus infectivity on permissive cells and may be involved in infection of CD4- cells. As to quaternary structure, the mature envelope protein (Env) consists of a homotrimer of non-covalently associated gp120-gp41 heterodimers. The resulting complex protrudes from the virus surface as a spike. There seems to be as few as 10 spikes on the average virion. In terms of processing, highly glycosylated by host. The high number of glycan on the protein is reffered to as 'glycan shield' because it contributes to hide protein sequence from adaptive immune system. Post-translationally, palmitoylation of the transmembrane protein and of Env polyprotein (prior to its proteolytic cleavage) is essential for their association with host cell membrane lipid rafts. Palmitoylation is therefore required for envelope trafficking to classical lipid rafts, but not for viral replication. Specific enzymatic cleavages in vivo yield mature proteins. Envelope glycoproteins are synthesized as an inactive precursor that is heavily N-glycosylated and processed likely by host cell furin in the Golgi to yield the mature SU and TM proteins. The cleavage site between SU and TM requires the minimal sequence [KR]-X-[KR]-R. About 2 of the 9 disulfide bonds of gp41 are reduced by P4HB/PDI, following binding to CD4 receptor.

The protein localises to the virion membrane. It is found in the host cell membrane. It localises to the host endosome membrane. Oligomerizes in the host endoplasmic reticulum into predominantly trimers. In a second time, gp160 transits in the host Golgi, where glycosylation is completed. The precursor is then proteolytically cleaved in the trans-Golgi and thereby activated by cellular furin or furin-like proteases to produce gp120 and gp41. Its function is as follows. Attaches the virus to the host lymphoid cell by binding to the primary receptor CD4. This interaction induces a structural rearrangement creating a high affinity binding site for a chemokine coreceptor like CXCR4 and/or CCR5. Acts as a ligand for CD209/DC-SIGN and CLEC4M/DC-SIGNR, which are respectively found on dendritic cells (DCs), and on endothelial cells of liver sinusoids and lymph node sinuses. These interactions allow capture of viral particles at mucosal surfaces by these cells and subsequent transmission to permissive cells. HIV subverts the migration properties of dendritic cells to gain access to CD4+ T-cells in lymph nodes. Virus transmission to permissive T-cells occurs either in trans (without DCs infection, through viral capture and transmission), or in cis (following DCs productive infection, through the usual CD4-gp120 interaction), thereby inducing a robust infection. In trans infection, bound virions remain infectious over days and it is proposed that they are not degraded, but protected in non-lysosomal acidic organelles within the DCs close to the cell membrane thus contributing to the viral infectious potential during DCs' migration from the periphery to the lymphoid tissues. On arrival at lymphoid tissues, intact virions recycle back to DCs' cell surface allowing virus transmission to CD4+ T-cells. In terms of biological role, acts as a class I viral fusion protein. Under the current model, the protein has at least 3 conformational states: pre-fusion native state, pre-hairpin intermediate state, and post-fusion hairpin state. During fusion of viral and target intracellular membranes, the coiled coil regions (heptad repeats) assume a trimer-of-hairpins structure, positioning the fusion peptide in close proximity to the C-terminal region of the ectodomain. The formation of this structure appears to drive apposition and subsequent fusion of viral and target cell membranes. Complete fusion occurs in host cell endosomes and is dynamin-dependent, however some lipid transfer might occur at the plasma membrane. The virus undergoes clathrin-dependent internalization long before endosomal fusion, thus minimizing the surface exposure of conserved viral epitopes during fusion and reducing the efficacy of inhibitors targeting these epitopes. Membranes fusion leads to delivery of the nucleocapsid into the cytoplasm. This chain is Envelope glycoprotein gp160, found in Homo sapiens (Human).